The chain runs to 233 residues: Antiholin-like protein LrgB (233 aa).

Helical transmembrane passes span leucine 5 to threonine 25, glycine 33 to leucine 53, isoleucine 63 to leucine 83, isoleucine 97 to isoleucine 117, leucine 152 to valine 172, and isoleucine 212 to leucine 232.

This sequence belongs to the CidB/LrgB family. LrgB subfamily.

The protein localises to the cell membrane. Its function is as follows. Inhibits the expression or activity of extracellular murein hydrolases by interacting, possibly with LrgA, with the holin-like proteins CidA and/or CidB. The LrgAB and CidAB proteins may affect the proton motive force of the membrane. May be involved in programmed cell death (PCD), possibly triggering PCD in response to antibiotics and environmental stresses. This chain is Antiholin-like protein LrgB, found in Staphylococcus epidermidis (strain ATCC 12228 / FDA PCI 1200).